Here is a 427-residue protein sequence, read N- to C-terminus: Serine hydroxymethyltransferase (427 aa).

(6S)-5,6,7,8-tetrahydrofolate contacts are provided by residues L117 and 121-123 (GHL). K226 carries the post-translational modification N6-(pyridoxal phosphate)lysine.

This sequence belongs to the SHMT family. In terms of assembly, homodimer. Requires pyridoxal 5'-phosphate as cofactor.

The protein resides in the cytoplasm. The enzyme catalyses (6R)-5,10-methylene-5,6,7,8-tetrahydrofolate + glycine + H2O = (6S)-5,6,7,8-tetrahydrofolate + L-serine. The catalysed reaction is L-threonine = acetaldehyde + glycine. It catalyses the reaction L-allo-threonine = acetaldehyde + glycine. Its pathway is one-carbon metabolism; tetrahydrofolate interconversion. It functions in the pathway amino-acid biosynthesis; glycine biosynthesis; glycine from L-serine: step 1/1. Functionally, its primary function is to catalyze the reversible interconversion of serine and glycine with tetrahydrofolate (THF) serving as the one-carbon carrier. This reaction serves as the major source of one-carbon groups required for the biosynthesis of purines, thymidylate, methionine, and other important biomolecules. Also exhibits THF-independent aldolase activity toward beta-hydroxyamino acids, producing glycine and aldehydes, via a retro-aldol mechanism. Thus, is able to catalyze the cleavage of L-threonine, L-allo-threonine, L-threo-beta-phenylserine and L-erythro-beta-phenylserine. This second activity is likely to be physiological in H.thermophilus, which is an organism that lacks the ortholog gene for the 'real' threonine aldolase characterized in mesophilic bacteria (LtaE), yeast and plants. The sequence is that of Serine hydroxymethyltransferase from Hydrogenobacter thermophilus (strain DSM 6534 / IAM 12695 / TK-6).